The chain runs to 163 residues: MAGYGVDGQRMMGVVGMDSRGMGYGGRPEPPLPPDASSTLYIEGLPANCTRREVSHIFRPFVGFREVRLVNKESRHPGGDPHVLCFVDFDNPAQATIALEALQGHVTDDVNVSAPAEEGILREKRAQCAQGFLPCKDNKCYCCIGGRTHDCYYTMAQCSHACF.

In terms of domain architecture, RRM spans 38–117 (STLYIEGLPA…DDVNVSAPAE (80 aa)). Intrachain disulfides connect cysteine 140-cysteine 162 and cysteine 143-cysteine 151.

The protein belongs to the MEG family. Ubiquitous.

This Zea mays (Maize) protein is Protein MATERNALLY EXPRESSED GENE 5 (MEG5).